Reading from the N-terminus, the 140-residue chain is Nucleoside diphosphate kinase (140 aa).

6 residues coordinate ATP: lysine 11, phenylalanine 59, arginine 87, threonine 93, arginine 104, and asparagine 114. Residue histidine 117 is the Pros-phosphohistidine intermediate of the active site.

The protein belongs to the NDK family. As to quaternary structure, homotetramer. It depends on Mg(2+) as a cofactor.

It is found in the cytoplasm. The catalysed reaction is a 2'-deoxyribonucleoside 5'-diphosphate + ATP = a 2'-deoxyribonucleoside 5'-triphosphate + ADP. It catalyses the reaction a ribonucleoside 5'-diphosphate + ATP = a ribonucleoside 5'-triphosphate + ADP. Major role in the synthesis of nucleoside triphosphates other than ATP. The ATP gamma phosphate is transferred to the NDP beta phosphate via a ping-pong mechanism, using a phosphorylated active-site intermediate. The polypeptide is Nucleoside diphosphate kinase (Rhizobium meliloti (strain 1021) (Ensifer meliloti)).